We begin with the raw amino-acid sequence, 615 residues long: TANK-binding kinase 1-binding protein 1 (615 aa).

The homodimerization stretch occupies residues 1-279 (MESMFEDDIS…QDLASNQSER (279 aa)). A coiled-coil region spans residues 48 to 162 (YGDIKERLGG…ALVETHLRQI (115 aa)). At S184 the chain carries Phosphoserine. Residues 221-276 (VSDLERRRLEEALEAAQGEARGAQLREEQLQAECERLQGELKQLQETRAQDLASNQ) adopt a coiled-coil conformation. The tract at residues 280 to 329 (DMAWVKRVGDDQVNLALAYTELTEELGRLRELSSLQGRILRTLLQEQARS) is interaction with TBK1 and IKBKE. Residues 326-458 (QARSGGQRHS…SHHVKAGFQG (133 aa)) form a disordered region. The segment covering 345 to 365 (PQCPSPSPPARAAPPCPPCQS) has biased composition (pro residues). Phosphoserine occurs at positions 365, 372, 379, 385, 400, and 415. The segment covering 389–406 (PSCPSPVPQRRSPVPPSC) has biased composition (pro residues). A compositionally biased stretch (pro residues) spans 416–435 (PVPPSCPAPQPRPPPPPPPG). Phosphoserine is present on residues S504 and S534. The UBZ1-type zinc-finger motif lies at 583–609 (IRSCPLCQLGFPVGYPDDALIKHIDSH). Positions 586, 589, 605, and 609 each coordinate Zn(2+).

Homodimer. May form a heterodimer with NAP1. Interacts with TKB1 and IKBKE. Weakly interacts with DDX3X. In terms of assembly, (Microbial infection) Interacts with vaccinia virus protein C6. As to expression, detected in leukocytes, lung, placenta, small intestine, liver, kidney, spleen, muscle, heart, brain and at low levels in thymus.

Its function is as follows. Adapter protein which constitutively binds TBK1 and IKBKE playing a role in antiviral innate immunity. This is TANK-binding kinase 1-binding protein 1 from Homo sapiens (Human).